A 213-amino-acid chain; its full sequence is ATP phosphoribosyltransferase (213 aa).

It belongs to the ATP phosphoribosyltransferase family. Short subfamily. Heteromultimer composed of HisG and HisZ subunits.

The protein resides in the cytoplasm. It catalyses the reaction 1-(5-phospho-beta-D-ribosyl)-ATP + diphosphate = 5-phospho-alpha-D-ribose 1-diphosphate + ATP. It functions in the pathway amino-acid biosynthesis; L-histidine biosynthesis; L-histidine from 5-phospho-alpha-D-ribose 1-diphosphate: step 1/9. Catalyzes the condensation of ATP and 5-phosphoribose 1-diphosphate to form N'-(5'-phosphoribosyl)-ATP (PR-ATP). Has a crucial role in the pathway because the rate of histidine biosynthesis seems to be controlled primarily by regulation of HisG enzymatic activity. The polypeptide is ATP phosphoribosyltransferase (Nitrosococcus oceani (strain ATCC 19707 / BCRC 17464 / JCM 30415 / NCIMB 11848 / C-107)).